The chain runs to 257 residues: Phosphonates import ATP-binding protein PhnC (257 aa).

Residues isoleucine 2–alanine 246 enclose the ABC transporter domain. Glycine 35–serine 42 lines the ATP pocket.

This sequence belongs to the ABC transporter superfamily. Phosphonates importer (TC 3.A.1.9.1) family. The complex is composed of two ATP-binding proteins (PhnC), two transmembrane proteins (PhnE) and a solute-binding protein (PhnD).

Its subcellular location is the cell membrane. The catalysed reaction is phosphonate(out) + ATP + H2O = phosphonate(in) + ADP + phosphate + H(+). In terms of biological role, part of the ABC transporter complex PhnCDE involved in phosphonates import. Responsible for energy coupling to the transport system. In Bacillus cereus (strain ATCC 10987 / NRS 248), this protein is Phosphonates import ATP-binding protein PhnC.